We begin with the raw amino-acid sequence, 300 residues long: 4-diphosphocytidyl-2-C-methyl-D-erythritol kinase (300 aa).

Lys-12 is a catalytic residue. An ATP-binding site is contributed by 94–104; sequence PAQAGIGGGSS. Asp-136 is an active-site residue.

It belongs to the GHMP kinase family. IspE subfamily.

It catalyses the reaction 4-CDP-2-C-methyl-D-erythritol + ATP = 4-CDP-2-C-methyl-D-erythritol 2-phosphate + ADP + H(+). The protein operates within isoprenoid biosynthesis; isopentenyl diphosphate biosynthesis via DXP pathway; isopentenyl diphosphate from 1-deoxy-D-xylulose 5-phosphate: step 3/6. Functionally, catalyzes the phosphorylation of the position 2 hydroxy group of 4-diphosphocytidyl-2C-methyl-D-erythritol. The polypeptide is 4-diphosphocytidyl-2-C-methyl-D-erythritol kinase (Verminephrobacter eiseniae (strain EF01-2)).